Here is a 340-residue protein sequence, read N- to C-terminus: Protein RecA (340 aa).

Position 67–74 (67–74) interacts with ATP; that stretch reads GNESSGKT.

The protein belongs to the RecA family.

It is found in the cytoplasm. Its function is as follows. Can catalyze the hydrolysis of ATP in the presence of single-stranded DNA, the ATP-dependent uptake of single-stranded DNA by duplex DNA, and the ATP-dependent hybridization of homologous single-stranded DNAs. It interacts with LexA causing its activation and leading to its autocatalytic cleavage. This is Protein RecA from Mycoplasma genitalium (strain ATCC 33530 / DSM 19775 / NCTC 10195 / G37) (Mycoplasmoides genitalium).